The chain runs to 1599 residues: MTSRQGRQAIAATAAMGVAVALALPTAAFAQSATQGKETATTTSSGTTYYVSSAHGDDANAGTSENAPWKSLTKVNDIASDLGPGDSVLLEYGSEFNDQYLHIKDTAGNADAPITISAYGDADEGKPVIASNGVKGSQWEQDYRANVGNHKNKGTVSTTLLLKDVSYITVSNLEITNDDADVYDPIDTWKWTDTPDSDGTKLDRSASRMDRTGVAGIAENGATMSNVTLDNLYIHDVDGNIYNKHMANGGIYFMAHYPMENTSAETDVWLREHVSRFDHVTIRNSTVKDVDRWGIAVGYTAYLNYIDANYGDGSIDDALIAKYGSTNVRIENNYVKGAGGDAITLMYCDRPVIEHNVGDSVSKHINTQDYTQPGSYGGRVAAGIWPWRCKDPVFQYNEMYNNLNAEHGNGDGQAWDADYGDGTLYQYNYSYGNSFASLMICNWYAVNTTFRYNISQNDRQGVFDLPSNGPGNHIYNNTVYVDADSQVLTKRSNSQSLFENNIFINATNTKKTETWNRGSQNGGQTYDNNMYVNYANKPTSDANAIEADDVSAVLAGAGSAPTSALKSGAEHARTGEKAAFDGYRPVAGSKAINAGKVVSDLNDYAVENDFLGNAVKGRPDLGAVESDVVSVTMASSKYETGTETDSGTGDKTKVIHVTFTDKNPVTVKELLSNVSADKGVDKAVYRVADAKSGKSADARSAESEPNMLDRLLSLLPGSDRNAKDDETKLADSEPVRDGDILRFSAEGTDETDEYTIRQRITWDWVADYEQGVADFDWKAQRRTSAGGEWTTISAYDGSWPNTVYDQYYGVGVNGTLAELSGDRKQTHGLLIDKPGDGLPTAMAWKAPESGTVMLSLKTFADKIAEPYLRQNADNAGKKVTLSLMRNDETLCSADDLSVYQKSSEQFAQCLAEHGSIDVQEGDWIRIVADAETGVKAPSLHISPVITYEDKAPAAPKQNVRYDVSYAATDAVVGTQSAVAAAFTADGGEADAPDGVAFAFKDGGDEGEASPVIDASTGAVTFTPAAGQYGATVTRTVVVTYADGSSDETTVTFRVAQSHAQRLNVLYPTVRGDAGTDLKRTPKFTLKADGAAASVPEGTTFALGANAPAGASVDMANGTVTLNSGVGGTVTVPVTVTFADDGASVSSTARFEVTAPAALGSSELETATVDGVNVVYAPFSADSPMTVAQLLAKVTAEPSGADKGVYRDGVRLEAGAELAENDVLRFSAKGSTVSDDYVVKSKTTWDWVNDFQVRVQGPIWYGQRQTEADGVWSDIADFDATYPNWMYETYYGPGVDYANHSLPTDRSAIHGLISDSPASAGGSAMAWKAPKAGTVKVSIREDEPYLRQDGSNGKALTLRLMHDDKVVCFADLTVSKQRSEEFANCVADKGEIAVEAGDWIRVTATSASGMNKPSAHISPVIAYMAASTPGPEPVPVDKSTLKATVEEALGLAESDYTDESWAALVAARDAAQTVLDDDAATAEQVETAQNALRDAIDGLEKKPVDPDPNPKPDPNPDPDPTPDPDPDPGPDTKPGDGSGNGSGTGNGSGSGNGSTGSGSDGATTGGKLTATGADVAGAAAMVALTAAAGIGLAAAARRRR.

Positions 1-30 form a signal peptide, tat-type signal; the sequence is MTSRQGRQAIAATAAMGVAVALALPTAAFA. Histidine 150 serves as a coordination point for beta-D-galactosyl-(1-&gt;3)-N-acetyl-D-glucosamine. PbH1 repeat units follow at residues 165–190, 224–255, 277–299, 325–347, 348–388, and 389–437; these read VSYI…DTWK, MSNV…YFMA, FDHV…AVGY, STNV…TLMY, CDRP…WPWR, and CKDP…SFAS. Residues aspartate 178, aspartate 179, valine 182, and aspartate 238 each contribute to the Ca(2+) site. Beta-D-galactosyl-(1-&gt;3)-N-acetyl-D-glucosamine-binding residues include lysine 244 and histidine 245. The beta-D-galactosyl-(1-&gt;3)-N-acetyl-D-glucosamine site is built by tryptophan 387, aspartate 411, aspartate 418, and cysteine 441. Catalysis depends on aspartate 411, which acts as the Proton donor/acceptor. Aspartate 418 serves as the catalytic Nucleophile. One copy of the PbH1 7 repeat lies at 469-506; sequence GPGNHIYNNTVYVDADSQVLTKRSNSQSLFENNIFINA. The 63-residue stretch at 1436 to 1498 folds into the FIVAR domain; it reads DKSTLKATVE…NALRDAIDGL (63 aa). Positions 1494–1509 are enriched in basic and acidic residues; the sequence is AIDGLEKKPVDPDPNP. The interval 1494–1568 is disordered; it reads AIDGLEKKPV…DGATTGGKLT (75 aa). The span at 1535 to 1558 shows a compositional bias: gly residues; sequence DGSGNGSGTGNGSGSGNGSTGSGS. Residues 1559-1568 show a composition bias toward low complexity; that stretch reads DGATTGGKLT. A helical membrane pass occupies residues 1574–1594; sequence VAGAAAMVALTAAAGIGLAAA.

This sequence belongs to the glycosyl hydrolase 136 (GH136) family. In terms of assembly, homodimer. Requires Ca(2+) as cofactor. Mg(2+) serves as cofactor. Post-translationally, predicted to be exported by the Tat system. The position of the signal peptide cleavage has not been experimentally proven.

The protein localises to the cell membrane. It carries out the reaction beta-D-Gal-(1-&gt;3)-beta-D-GlcNAc-(1-&gt;3)-beta-D-Gal-(1-&gt;4)-D-Glc + H2O = beta-D-galactosyl-(1-&gt;3)-N-acetyl-D-glucosamine + lactose. Requires the chaperone LnbY for its proper folding and active expression. Is potently and competitively inhibited by LNB-PUGNAc and LNB-NHAcDNJ in vitro. In terms of biological role, present in the infant gut, this enzyme is involved in the assimilation of type-1 human milk oligosaccharides (HMOs). It hydrolyzes via a retaining mechanism the beta-D-GlcNAc-(1-&gt;3)-beta-D-Gal linkage in lacto-N-tetraose (LNT or beta-D-Gal-(1-&gt;3)-beta-D-GlcNAc-(1-&gt;3)-beta-D-Gal-(1-&gt;4)-D-Glc), an abundant HMO unique to human breast milk, releasing lacto-N-biose (LNB or beta-D-Gal-(1-&gt;3)-D-GlcNAc) and lactose. With a much lower efficiency, is also able to cleave the same linkage in lacto-N-fucopentaose I (alpha-Fuc(1-&gt;2)-beta-D-Gal-(1-&gt;3)-beta-D-GlcNAc(1-&gt;3)-beta-D-Gal-(1-&gt;4)-D-Glc), and sialyllacto-N-tetraose a (alpha-Neu5Ac-(2-&gt;3)-beta-D-Gal-(1-&gt;3)-beta-D-GlcNAc-(1-&gt;3)-beta-D-Gal-(1-&gt;4)-D-Glc). Is a key enzymatic factor for growth and proliferation of B.longum in the gut ecosystem of breast-fed infants. The chain is Lacto-N-biosidase from Bifidobacterium longum subsp. longum (strain ATCC 15707 / DSM 20219 / JCM 1217 / NCTC 11818 / E194b).